Consider the following 333-residue polypeptide: UPF0285 protein MTH_1441 (333 aa).

The protein belongs to the UPF0285 family.

The chain is UPF0285 protein MTH_1441 from Methanothermobacter thermautotrophicus (strain ATCC 29096 / DSM 1053 / JCM 10044 / NBRC 100330 / Delta H) (Methanobacterium thermoautotrophicum).